The chain runs to 642 residues: Threonine--tRNA ligase (642 aa).

Positions 1–61 constitute a TGS domain; sequence MPVITLPDGS…ENDATLAIIT (61 aa). Residues 243–534 form a catalytic region; sequence DHRKIGKQLD…LTEEFAGFFP (292 aa). Residues Cys-334, His-385, and His-511 each contribute to the Zn(2+) site.

This sequence belongs to the class-II aminoacyl-tRNA synthetase family. Homodimer. Requires Zn(2+) as cofactor.

The protein localises to the cytoplasm. It catalyses the reaction tRNA(Thr) + L-threonine + ATP = L-threonyl-tRNA(Thr) + AMP + diphosphate + H(+). Functionally, catalyzes the attachment of threonine to tRNA(Thr) in a two-step reaction: L-threonine is first activated by ATP to form Thr-AMP and then transferred to the acceptor end of tRNA(Thr). Also edits incorrectly charged L-seryl-tRNA(Thr). This chain is Threonine--tRNA ligase, found in Salmonella paratyphi C (strain RKS4594).